Here is a 192-residue protein sequence, read N- to C-terminus: 3-isopropylmalate dehydratase small subunit (192 aa).

It belongs to the LeuD family. LeuD type 1 subfamily. Heterodimer of LeuC and LeuD.

The catalysed reaction is (2R,3S)-3-isopropylmalate = (2S)-2-isopropylmalate. It participates in amino-acid biosynthesis; L-leucine biosynthesis; L-leucine from 3-methyl-2-oxobutanoate: step 2/4. Its function is as follows. Catalyzes the isomerization between 2-isopropylmalate and 3-isopropylmalate, via the formation of 2-isopropylmaleate. The chain is 3-isopropylmalate dehydratase small subunit from Zymomonas mobilis subsp. mobilis (strain ATCC 31821 / ZM4 / CP4).